We begin with the raw amino-acid sequence, 240 residues long: MQAARGGAGRPGREGRGLERECERSPGPGVAMPPGPCAWPPRAALRLWLGCVCFALVQADSPSAPVNVTVRHLKANSAVVSWDVLEDEVVIGFAISQQKKDVRMLRFIQEVNTTTRSCALWDLEEDTEYIVHVQAISIQGQSPASEPVLFKTPREAEKMASKNKDEVTMKEMGRNQQLRTGEVLIIVVVLFMWAGVIALFCRQYDIIKDNEPNNNKEKTKSASETSTPEHQGGGLLRSKI.

Residues 1–10 (MQAARGGAGR) show a composition bias toward gly residues. The tract at residues 1 to 33 (MQAARGGAGRPGREGRGLERECERSPGPGVAMP) is disordered. Positions 11–24 (PGREGRGLERECER) are enriched in basic and acidic residues. Residues 64–155 (APVNVTVRHL…EPVLFKTPRE (92 aa)) enclose the Fibronectin type-III domain. 2 N-linked (GlcNAc...) asparagine glycosylation sites follow: Asn67 and Asn112. A helical transmembrane segment spans residues 181–201 (GEVLIIVVVLFMWAGVIALFC). Residues 210-221 (NEPNNNKEKTKS) are compositionally biased toward basic and acidic residues. The disordered stretch occupies residues 210 to 240 (NEPNNNKEKTKSASETSTPEHQGGGLLRSKI). The segment covering 231–240 (QGGGLLRSKI) has biased composition (gly residues). The Microbody targeting signal signature appears at 238–240 (SKI).

As to quaternary structure, dimer; may exist in other oligomeric forms. The extracellular domain is cleaved and released from the cell membrane. In terms of processing, N-Glycosylated. In terms of tissue distribution, in adult, it is highly expressed in skeletal muscle, heart and brain.

It is found in the cell membrane. It localises to the peroxisome membrane. The protein localises to the secreted. In terms of biological role, mediates beneficial effects of muscular exercise. Induces browning of white adipose tissue by stimulating UCP1 expression, at least in part, via the nuclear receptor PPARA. The protein is Fibronectin type III domain-containing protein 5 (Fndc5) of Mus musculus (Mouse).